A 168-amino-acid chain; its full sequence is 6,7-dimethyl-8-ribityllumazine synthase (168 aa).

5-amino-6-(D-ribitylamino)uracil contacts are provided by residues Trp-31, 65–67 (SFE), and 89–91 (CVV). (2S)-2-hydroxy-3-oxobutyl phosphate is bound at residue 94 to 95 (DT). His-97 acts as the Proton donor in catalysis. Tyr-122 is a binding site for 5-amino-6-(D-ribitylamino)uracil. Residue Arg-136 coordinates (2S)-2-hydroxy-3-oxobutyl phosphate.

This sequence belongs to the DMRL synthase family.

It catalyses the reaction (2S)-2-hydroxy-3-oxobutyl phosphate + 5-amino-6-(D-ribitylamino)uracil = 6,7-dimethyl-8-(1-D-ribityl)lumazine + phosphate + 2 H2O + H(+). The protein operates within cofactor biosynthesis; riboflavin biosynthesis; riboflavin from 2-hydroxy-3-oxobutyl phosphate and 5-amino-6-(D-ribitylamino)uracil: step 1/2. Functionally, catalyzes the formation of 6,7-dimethyl-8-ribityllumazine by condensation of 5-amino-6-(D-ribitylamino)uracil with 3,4-dihydroxy-2-butanone 4-phosphate. This is the penultimate step in the biosynthesis of riboflavin. The sequence is that of 6,7-dimethyl-8-ribityllumazine synthase from Phocaeicola vulgatus (strain ATCC 8482 / DSM 1447 / JCM 5826 / CCUG 4940 / NBRC 14291 / NCTC 11154) (Bacteroides vulgatus).